A 303-amino-acid polypeptide reads, in one-letter code: N-acetylmuramic acid 6-phosphate etherase (303 aa).

Residues 1–21 form a disordered region; sequence MQPSQLRSLTTESRNPNTMGI. Residues 58–221 enclose the SIS domain; the sequence is AYDSISNGGR…STSVMIRQGK (164 aa). The active-site Proton donor is the Glu-86. The active site involves Glu-117.

This sequence belongs to the GCKR-like family. MurNAc-6-P etherase subfamily. Homodimer.

The catalysed reaction is N-acetyl-D-muramate 6-phosphate + H2O = N-acetyl-D-glucosamine 6-phosphate + (R)-lactate. It functions in the pathway amino-sugar metabolism; N-acetylmuramate degradation. Functionally, specifically catalyzes the cleavage of the D-lactyl ether substituent of MurNAc 6-phosphate, producing GlcNAc 6-phosphate and D-lactate. The chain is N-acetylmuramic acid 6-phosphate etherase from Bacillus pumilus (strain SAFR-032).